A 346-amino-acid polypeptide reads, in one-letter code: N-acetyl-gamma-glutamyl-phosphate reductase (346 aa).

Residue Cys-149 is part of the active site.

Belongs to the NAGSA dehydrogenase family. Type 1 subfamily.

The protein localises to the cytoplasm. The catalysed reaction is N-acetyl-L-glutamate 5-semialdehyde + phosphate + NADP(+) = N-acetyl-L-glutamyl 5-phosphate + NADPH + H(+). The protein operates within amino-acid biosynthesis; L-arginine biosynthesis; N(2)-acetyl-L-ornithine from L-glutamate: step 3/4. Its function is as follows. Catalyzes the NADPH-dependent reduction of N-acetyl-5-glutamyl phosphate to yield N-acetyl-L-glutamate 5-semialdehyde. This is N-acetyl-gamma-glutamyl-phosphate reductase from Micrococcus luteus (strain ATCC 4698 / DSM 20030 / JCM 1464 / CCM 169 / CCUG 5858 / IAM 1056 / NBRC 3333 / NCIMB 9278 / NCTC 2665 / VKM Ac-2230) (Micrococcus lysodeikticus).